The chain runs to 371 residues: Probable palmitoyltransferase ZDHHC11B (371 aa).

2 consecutive transmembrane segments (helical) span residues 43–63 and 70–90; these read VVTW…FIPL and YIAY…HLIA. A DHHC domain is found at 125–175; it reads QFCHLCKVTVNKKTKHCISCNKCVSGFDHHCKWINNCVGSRNYWFFFSTVA. Catalysis depends on Cys155, which acts as the S-palmitoyl cysteine intermediate. 3 consecutive transmembrane segments (helical) span residues 177-197, 216-236, and 239-259; these read ATAG…QYLV, TWLL…VVII, and LVLL…IFHI. The segment at 335–371 is disordered; it reads DGDSKAQEADDAPSTSTLGLQQETTEPMKTDSAESED. Residues 347–359 show a composition bias toward polar residues; it reads PSTSTLGLQQETT. The segment covering 360-371 has biased composition (basic and acidic residues); it reads EPMKTDSAESED.

It belongs to the DHHC palmitoyltransferase family.

Its subcellular location is the membrane. It carries out the reaction L-cysteinyl-[protein] + hexadecanoyl-CoA = S-hexadecanoyl-L-cysteinyl-[protein] + CoA. In terms of biological role, probable palmitoyltransferase that could catalyze the addition of palmitate onto various protein substrates and be involved in a variety of cellular processes. May play a role in cell proliferation. The polypeptide is Probable palmitoyltransferase ZDHHC11B (Homo sapiens (Human)).